A 317-amino-acid chain; its full sequence is Ribosomal protein L11 methyltransferase (317 aa).

Residues T158, G179, D201, and N244 each contribute to the S-adenosyl-L-methionine site.

Belongs to the methyltransferase superfamily. PrmA family.

It is found in the cytoplasm. It carries out the reaction L-lysyl-[protein] + 3 S-adenosyl-L-methionine = N(6),N(6),N(6)-trimethyl-L-lysyl-[protein] + 3 S-adenosyl-L-homocysteine + 3 H(+). Its function is as follows. Methylates ribosomal protein L11. The protein is Ribosomal protein L11 methyltransferase of Streptococcus pyogenes serotype M4 (strain MGAS10750).